The chain runs to 98 residues: Co-chaperonin GroES (98 aa).

Belongs to the GroES chaperonin family. As to quaternary structure, heptamer of 7 subunits arranged in a ring. Interacts with the chaperonin GroEL.

Its subcellular location is the cytoplasm. In terms of biological role, together with the chaperonin GroEL, plays an essential role in assisting protein folding. The GroEL-GroES system forms a nano-cage that allows encapsulation of the non-native substrate proteins and provides a physical environment optimized to promote and accelerate protein folding. GroES binds to the apical surface of the GroEL ring, thereby capping the opening of the GroEL channel. The protein is Co-chaperonin GroES of Coprothermobacter proteolyticus (strain ATCC 35245 / DSM 5265 / OCM 4 / BT).